Reading from the N-terminus, the 366-residue chain is 8-hydroxyquercetin 8-O-methyltransferase (366 aa).

S-adenosyl-L-methionine is bound by residues 207 to 210, 231 to 232, 251 to 252, and Lys265; these read VGGG, DL, and DM. His269 acts as the Proton acceptor in catalysis.

This sequence belongs to the class I-like SAM-binding methyltransferase superfamily. Cation-independent O-methyltransferase family. COMT subfamily. As to quaternary structure, homodimer.

The enzyme catalyses 3,3',4',5,7,8-hexahydroxyflavone + S-adenosyl-L-methionine = 3,3',4',5,7-pentahydroxy-8-methoxyflavone + S-adenosyl-L-homocysteine + H(+). The catalysed reaction is 4',7,8-trihydroxyflavone + S-adenosyl-L-methionine = 4',7-dihydroxy-8-methoxyflavone + S-adenosyl-L-homocysteine + H(+). It catalyses the reaction 8-hydroxy-7-methoxyflavone + S-adenosyl-L-methionine = 7,8-dimethoxyflavone + S-adenosyl-L-homocysteine + H(+). The protein operates within flavonoid metabolism. Functionally, flavonoid 8-O-methyltransferase involved in the biosynthesis of polymethoxylated flavonoids natural products such as pebrellin, aroma compounds which contribute to the flavor of peppermint, and exhibit pharmacological activities such as anti-allergic, anti-oxidant, antibacterial, anti-proliferative, and anti-inflammatory effects. Catalyzes S-adenosylmethionine-dependent regioselective 8-O-methylation of flavonoids; active on various hydroxylated flavonoid substrates, including 7,8,3'4'-tetrahydroxy-flavone, 7,8,4'-trihydroxy-flavone and 8-hydroxy-flavone 7-methyl ether. In Mentha piperita (Peppermint), this protein is 8-hydroxyquercetin 8-O-methyltransferase.